Here is a 642-residue protein sequence, read N- to C-terminus: ATP-dependent zinc metalloprotease FtsH (642 aa).

The Cytoplasmic segment spans residues 1 to 6; sequence MGRFTK. The helical transmembrane segment at 7-27 threads the bilayer; it reads NIVLYLLIIAAFVIAIDAFSG. At 28–101 the chain is on the extracellular side; it reads QSANKSELSY…TAAPPEQPAW (74 aa). Residues 102-122 form a helical membrane-spanning segment; the sequence is WMSLLGSAIPIIILVVLFFFI. Residues 123-642 are Cytoplasmic-facing; sequence MQQTQGGGGR…LSEASSNEIK (520 aa). 194-201 provides a ligand contact to ATP; that stretch reads GPPGTGKT. H416 is a binding site for Zn(2+). The active site involves E417. Residues H420 and D492 each contribute to the Zn(2+) site. Over residues 597–610 the composition is skewed to basic and acidic residues; the sequence is TTKEPEAEEPKVAS. The interval 597–642 is disordered; that stretch reads TTKEPEAEEPKVASEADSSIVPEGVDAKKTTSTVADLSEASSNEIK. Over residues 626-642 the composition is skewed to polar residues; that stretch reads TTSTVADLSEASSNEIK.

This sequence in the central section; belongs to the AAA ATPase family. In the C-terminal section; belongs to the peptidase M41 family. Homohexamer. It depends on Zn(2+) as a cofactor.

It is found in the cell membrane. Its function is as follows. Acts as a processive, ATP-dependent zinc metallopeptidase for both cytoplasmic and membrane proteins. Plays a role in the quality control of integral membrane proteins. In Veillonella parvula (strain ATCC 10790 / DSM 2008 / CCUG 5123 / JCM 12972 / NCTC 11810 / Te3) (Veillonella alcalescens), this protein is ATP-dependent zinc metalloprotease FtsH.